The chain runs to 440 residues: Histidinol dehydrogenase (440 aa).

3 residues coordinate NAD(+): tyrosine 136, glutamine 197, and asparagine 220. 3 residues coordinate substrate: serine 243, glutamine 265, and histidine 268. Zn(2+) is bound by residues glutamine 265 and histidine 268. Active-site proton acceptor residues include glutamate 333 and histidine 334. Substrate-binding residues include histidine 334, aspartate 367, glutamate 421, and histidine 426. Zn(2+) is bound at residue aspartate 367. Residue histidine 426 participates in Zn(2+) binding.

It belongs to the histidinol dehydrogenase family. Requires Zn(2+) as cofactor.

It carries out the reaction L-histidinol + 2 NAD(+) + H2O = L-histidine + 2 NADH + 3 H(+). Its pathway is amino-acid biosynthesis; L-histidine biosynthesis; L-histidine from 5-phospho-alpha-D-ribose 1-diphosphate: step 9/9. In terms of biological role, catalyzes the sequential NAD-dependent oxidations of L-histidinol to L-histidinaldehyde and then to L-histidine. The sequence is that of Histidinol dehydrogenase from Pseudomonas aeruginosa (strain ATCC 15692 / DSM 22644 / CIP 104116 / JCM 14847 / LMG 12228 / 1C / PRS 101 / PAO1).